Reading from the N-terminus, the 151-residue chain is MKSRRQRAILEIIGAEVVRTQEELAQRLRERGMEVTQATVSRDIKELGLIKVPVSKDESRYAPPAEAAQVPQAQDRLRRLLRDTVTHVDSSLNIVVIRTLPGHAHAVAGAIDHSHWPEVLGTVAGDDTIFIVVKPVEAVEALMDKVRRWVE.

Belongs to the ArgR family.

It localises to the cytoplasm. The protein operates within amino-acid biosynthesis; L-arginine biosynthesis [regulation]. In terms of biological role, regulates arginine biosynthesis genes. This Heliobacterium modesticaldum (strain ATCC 51547 / Ice1) protein is Arginine repressor.